The chain runs to 202 residues: dTTP/UTP pyrophosphatase (202 aa).

The active-site Proton acceptor is the Asp76.

The protein belongs to the Maf family. YhdE subfamily. A divalent metal cation serves as cofactor.

The protein resides in the cytoplasm. The enzyme catalyses dTTP + H2O = dTMP + diphosphate + H(+). The catalysed reaction is UTP + H2O = UMP + diphosphate + H(+). Functionally, nucleoside triphosphate pyrophosphatase that hydrolyzes dTTP and UTP. May have a dual role in cell division arrest and in preventing the incorporation of modified nucleotides into cellular nucleic acids. This Neisseria meningitidis serogroup B (strain ATCC BAA-335 / MC58) protein is dTTP/UTP pyrophosphatase.